Here is a 71-residue protein sequence, read N- to C-terminus: MKKIVFVLVLMLSSFGAFGQETVSGQFSDALSTPITAEVYKQACDPPLPPAEVSSDWDCCDVCCNPACAGC.

A signal peptide spans 1 to 19; sequence MKKIVFVLVLMLSSFGAFG. The propeptide occupies 20–53; that stretch reads QETVSGQFSDALSTPITAEVYKQACDPPLPPAEV. Cystine bridges form between Cys-59/Cys-64, Cys-60/Cys-68, and Cys-63/Cys-71.

The protein belongs to the heat-stable enterotoxin family.

Its subcellular location is the secreted. Functionally, toxin which activates the particulate form of guanylate cyclase and increases cyclic GMP levels within the host intestinal epithelial cells. In Yersinia enterocolitica, this protein is Heat-stable enterotoxin A (ystA).